Reading from the N-terminus, the 135-residue chain is Ribosome-binding factor A (135 aa).

Belongs to the RbfA family. As to quaternary structure, monomer. Binds 30S ribosomal subunits, but not 50S ribosomal subunits or 70S ribosomes.

Its subcellular location is the cytoplasm. Functionally, one of several proteins that assist in the late maturation steps of the functional core of the 30S ribosomal subunit. Associates with free 30S ribosomal subunits (but not with 30S subunits that are part of 70S ribosomes or polysomes). Required for efficient processing of 16S rRNA. May interact with the 5'-terminal helix region of 16S rRNA. The chain is Ribosome-binding factor A from Sinorhizobium fredii (strain NBRC 101917 / NGR234).